The following is a 1387-amino-acid chain: MNELMKILGQGGQSLSFDQIKIQMASPEQIRSWSYGEIKKPETINYRTFKPERDGLFCARIFGPIKDYECLCGKYKRMKFRGIVCEKCGVEVTLAKVRRERMGHIELASPVAHIWFLKSLPSRIGLMVDLTLKELEKILYFENYVVLEPGLTDLKLHQLLTEEQLLNKQDEFGDDAFRAGIGAEAIKSVLEGIDIDEDKVRLRAELKETTSETKRKKLVKRLKLIEAFAESGAKPEWMILDVVPVIPPELRPLVPLDGGRFATSDLNDLYRRVINRNNRLKRLIELRAPDIIVRNEKRMLQESVDALFDNGRRGRAITGANKRPLKSLSDMLKGKQGRFRQNLLGKRVDYSGRSVIVVGPEMKLHQCGLPKKMALELFKPFIYSKLEKYGHATTIKAAKRMVEKERPEVWDILEEVIREHPVMLNRAPTLHRLGIQAFEPVLIEGKAIQLHPLVTTAFNADFDGDQMAVHVPLSLEAQLEARVLMMSTNNILSPANGKPIIVPSQDIVLGLYYLSLETPEFRNTPDDKAQAFGTLGEIEAALHARTVTLHTKIRARLHTVDDQGSPIRVRVVTTPGRMLIAQILPRHPNVPFALINKQLTKKNVSDVIDAVYRHCGQKECVIFADRLMGLGFGQAAKAGISFGKDDLIIPAEKQEMIEKTAGEVKEFEQQYQDGLITAGERYNKVVDAWSRCTDEVAGAMMKEISKQELGRPINSVWMMSHSGARGSPAQMRQLAGMRGLMAKPSGEIIEQPIIANFKEGLSVLEYFNSTHGARKGLADTALKTANSGYLTRRLVDVAQDCIIVENDCGTERGLTVRAVMDGGEVVSSLSERILGRTLSEDVLDPTTNKILYPRNTLIEEEHAEKIEKAGIEVVKIRSVLTCESTVGVCGHCYGRDLARGTPVNIGEAVGVIAAQSIGEPGTQLTMRTFHIGGAAQRGAEQSSVEASHDGIVTVKNRNVVLNSQNVAIVMSRNCEIVLADEKGRERARYRVPYGARLLTDEGAQVTRAQKLAEWDPYTLPIITERAGKVEYLDLLDGVTLVERMDEVTGLTSKVVVDYKQNARGVDLRPRLQLKDESGDVVRLSNNTDARYFLSPDSILSVENGAEVNAGDVLARIPREGSKTRDITGGLPRVAELFEARRPKDHAVIAETDGRVEFGKDYKAKRRIIVKNDETGEETEYLIPKGKHVSVQEGDFVRLGDPLVDGPRVPHDILKVLGVEALSDYLVNEIQDVYRLQGVKINDKHIEVIVRQMLQKVEILDPGDTMYLIGEQVDRLEFEAENRKREREGERPAVAMPVLQGITKASLQTQSFISAASFQETTRVLTEAATAGKVDTLNGLKENVIVGRLIPAGTGSVMNRLRRIASGQDEAKGVGQETPRLSGQEAAE.

Residues Cys70, Cys72, Cys85, and Cys88 each coordinate Zn(2+). 3 residues coordinate Mg(2+): Asp461, Asp463, and Asp465. Zn(2+) contacts are provided by Cys808, Cys882, Cys889, and Cys892. Residues 1367–1387 are disordered; sequence QDEAKGVGQETPRLSGQEAAE.

This sequence belongs to the RNA polymerase beta' chain family. The RNAP catalytic core consists of 2 alpha, 1 beta, 1 beta' and 1 omega subunit. When a sigma factor is associated with the core the holoenzyme is formed, which can initiate transcription. Mg(2+) is required as a cofactor. It depends on Zn(2+) as a cofactor.

The enzyme catalyses RNA(n) + a ribonucleoside 5'-triphosphate = RNA(n+1) + diphosphate. Functionally, DNA-dependent RNA polymerase catalyzes the transcription of DNA into RNA using the four ribonucleoside triphosphates as substrates. This chain is DNA-directed RNA polymerase subunit beta', found in Granulibacter bethesdensis (strain ATCC BAA-1260 / CGDNIH1).